The chain runs to 372 residues: GTPase Obg (372 aa).

The 159-residue stretch at 1–159 (MKFIDEARIE…RMLKLELKVL (159 aa)) folds into the Obg domain. Residues 128–147 (LHFKSSTNRAPRQKTDGKPG) are disordered. Residues 160 to 334 (ADVGLLGMPN…LVYAIHDYLV (175 aa)) enclose the OBG-type G domain. GTP contacts are provided by residues 166 to 173 (GMPNAGKS), 191 to 195 (FTTLA), 213 to 216 (DIPG), 284 to 287 (NKLD), and 315 to 317 (SAL). Positions 173 and 193 each coordinate Mg(2+).

The protein belongs to the TRAFAC class OBG-HflX-like GTPase superfamily. OBG GTPase family. In terms of assembly, monomer. Mg(2+) serves as cofactor.

The protein localises to the cytoplasm. An essential GTPase which binds GTP, GDP and possibly (p)ppGpp with moderate affinity, with high nucleotide exchange rates and a fairly low GTP hydrolysis rate. Plays a role in control of the cell cycle, stress response, ribosome biogenesis and in those bacteria that undergo differentiation, in morphogenesis control. The polypeptide is GTPase Obg (Burkholderia pseudomallei (strain 668)).